The following is a 240-amino-acid chain: Cell division control protein 14 (240 aa).

Interacts with sid1.

It localises to the cytoplasm. Its subcellular location is the cytoskeleton. The protein localises to the microtubule organizing center. It is found in the spindle pole body. In terms of biological role, has a role in the septation initiation network (SIN) required for cytokinesis. In Schizosaccharomyces pombe (strain 972 / ATCC 24843) (Fission yeast), this protein is Cell division control protein 14 (cdc14).